Consider the following 264-residue polypeptide: 3-deoxy-manno-octulosonate cytidylyltransferase (264 aa).

Belongs to the KdsB family.

It localises to the cytoplasm. The catalysed reaction is 3-deoxy-alpha-D-manno-oct-2-ulosonate + CTP = CMP-3-deoxy-beta-D-manno-octulosonate + diphosphate. It functions in the pathway nucleotide-sugar biosynthesis; CMP-3-deoxy-D-manno-octulosonate biosynthesis; CMP-3-deoxy-D-manno-octulosonate from 3-deoxy-D-manno-octulosonate and CTP: step 1/1. Its pathway is bacterial outer membrane biogenesis; lipopolysaccharide biosynthesis. Its function is as follows. Activates KDO (a required 8-carbon sugar) for incorporation into bacterial lipopolysaccharide in Gram-negative bacteria. The polypeptide is 3-deoxy-manno-octulosonate cytidylyltransferase (Marinomonas sp. (strain MWYL1)).